Here is a 169-residue protein sequence, read N- to C-terminus: Centrin-1 (169 aa).

Residues M1–E21 are essential for homooligomerization. A disordered region spans residues M1–E25. EF-hand domains are found at residues E25–E60, P61–E96, D98–N133, and L134–F169. Ca(2+) is bound by residues D38, D40, S42, C44, E49, D74, D76, T78, S80, and E85.

Belongs to the centrin family. Monomer. Homooligomerizes in a Ca(2+)-dependent manner. Interaction via the C-terminus with other proteins disrupts and/or prevents homooligomerization. Interacts with SFI1.

Its subcellular location is the cytoplasm. It is found in the cytoskeleton. It localises to the microtubule organizing center. The protein localises to the centrosome. Its function is as follows. Acts as a calcium sensor. Part of the centrosome outer core complex. The protein is Centrin-1 of Toxoplasma gondii (strain ATCC 50611 / Me49).